The primary structure comprises 426 residues: Histidine--tRNA ligase (426 aa).

This sequence belongs to the class-II aminoacyl-tRNA synthetase family. In terms of assembly, homodimer.

The protein resides in the cytoplasm. The catalysed reaction is tRNA(His) + L-histidine + ATP = L-histidyl-tRNA(His) + AMP + diphosphate + H(+). The chain is Histidine--tRNA ligase from Streptococcus thermophilus (strain ATCC BAA-491 / LMD-9).